We begin with the raw amino-acid sequence, 562 residues long: Protoporphyrinogen oxidase 1, chloroplastic (562 aa).

The N-terminal 48 residues, 1-48, are a transit peptide targeting the chloroplast; sequence MSAMALSSTMALSLPQSSMSLSHCRHNRITILIPSSSLRRRGGSSIRC. Residues 88-93, 115-116, and 137-140 each bind FAD; these read GGGISG, EA, and GPNS. The disordered stretch occupies residues 274-302; that stretch reads TLKTIQERKDNPKPPRDPRLPKPKGQTVG. Over residues 278–293 the composition is skewed to basic and acidic residues; that stretch reads IQERKDNPKPPRDPRL. Residues Val323 and 536–538 each bind FAD; that span reads VAL.

This sequence belongs to the protoporphyrinogen/coproporphyrinogen oxidase family. Protoporphyrinogen oxidase subfamily. It depends on FAD as a cofactor.

Its subcellular location is the plastid. It localises to the chloroplast thylakoid membrane. The protein resides in the chloroplast inner membrane. It carries out the reaction protoporphyrinogen IX + 3 O2 = protoporphyrin IX + 3 H2O2. It functions in the pathway porphyrin-containing compound metabolism; protoporphyrin-IX biosynthesis; protoporphyrin-IX from protoporphyrinogen-IX: step 1/1. Its pathway is porphyrin-containing compound metabolism; chlorophyll biosynthesis. Functionally, catalyzes the 6-electron oxidation of protoporphyrinogen-IX to form protoporphyrin-IX. The protein is Protoporphyrinogen oxidase 1, chloroplastic of Spinacia oleracea (Spinach).